The following is a 294-amino-acid chain: Acetyl-coenzyme A carboxylase carboxyl transferase subunit beta (294 aa).

The region spanning 25-294 (VWTKCTSCEQ…PLVVPVDGSH (270 aa)) is the CoA carboxyltransferase N-terminal domain. The Zn(2+) site is built by C29, C32, C48, and C51. Residues 29 to 51 (CTSCEQVLYSAELERNLEVCPKC) form a C4-type zinc finger.

It belongs to the AccD/PCCB family. As to quaternary structure, acetyl-CoA carboxylase is a heterohexamer composed of biotin carboxyl carrier protein (AccB), biotin carboxylase (AccC) and two subunits each of ACCase subunit alpha (AccA) and ACCase subunit beta (AccD). Zn(2+) is required as a cofactor.

The protein localises to the cytoplasm. It carries out the reaction N(6)-carboxybiotinyl-L-lysyl-[protein] + acetyl-CoA = N(6)-biotinyl-L-lysyl-[protein] + malonyl-CoA. It functions in the pathway lipid metabolism; malonyl-CoA biosynthesis; malonyl-CoA from acetyl-CoA: step 1/1. Functionally, component of the acetyl coenzyme A carboxylase (ACC) complex. Biotin carboxylase (BC) catalyzes the carboxylation of biotin on its carrier protein (BCCP) and then the CO(2) group is transferred by the transcarboxylase to acetyl-CoA to form malonyl-CoA. In Aliivibrio fischeri (strain MJ11) (Vibrio fischeri), this protein is Acetyl-coenzyme A carboxylase carboxyl transferase subunit beta.